The following is a 187-amino-acid chain: UPF0340 protein stu1894 (187 aa).

This sequence belongs to the UPF0340 family.

In Streptococcus thermophilus (strain ATCC BAA-250 / LMG 18311), this protein is UPF0340 protein stu1894.